Consider the following 145-residue polypeptide: Leghemoglobin-2 (145 aa).

Residues 3–145 (AFSDKQEGLV…ELAAAIKKAY (143 aa)) form the Globin domain. Tyrosine 26 and tyrosine 31 each carry nitrated tyrosine. Serine 46 is a heme b binding site. Serine 46 bears the Phosphoserine mark. Histidine 62 is an O2 binding site. Residues lysine 65, histidine 93, and lysine 96 each coordinate heme b. At tyrosine 134 the chain carries Nitrated tyrosine.

The protein belongs to the plant globin family. As to quaternary structure, monomer. Post-translationally, nitrated in effective nodules and particularly in hypoxic conditions; this mechanism may play a protective role in the symbiosis by buffering toxic peroxynitrite NO(2)(-). Nitration level decrease during nodule senescence. In terms of processing, phosphorylation at Ser-46 disrupts the molecular environment of its porphyrin ring oxygen binding pocket, thus leading to a reduced oxygen consumption and to the delivery of oxygen O(2) to symbiosomes. Root nodules.

The protein localises to the cytoplasm. The protein resides in the cytosol. It is found in the nucleus. Leghemoglobin that reversibly binds oxygen O(2) through a pentacoordinated heme iron. In root nodules, facilitates the diffusion of oxygen to the bacteroids while preventing the bacterial nitrogenase from being inactivated by buffering dioxygen, nitric oxide and carbon monoxide, and promoting the formation of reactive oxygen species (ROS, e.g. H(2)O(2)). This role is essential for symbiotic nitrogen fixation (SNF). This Vigna unguiculata (Cowpea) protein is Leghemoglobin-2.